The sequence spans 319 residues: Acetyl esterase (319 aa).

Positions 91-93 match the Involved in the stabilization of the negatively charged intermediate by the formation of the oxyanion hole motif; it reads HGG. Residues Ser-165, Asp-262, and His-292 contribute to the active site.

The protein belongs to the 'GDXG' lipolytic enzyme family. In terms of assembly, homodimer. Interacts with MalT and MelA.

The protein localises to the cytoplasm. In terms of biological role, displays esterase activity towards short chain fatty esters (acyl chain length of up to 8 carbons). Able to hydrolyze triacetylglycerol (triacetin) and tributyrylglycerol (tributyrin), but not trioleylglycerol (triolein) or cholesterol oleate. Negatively regulates MalT activity by antagonizing maltotriose binding. Inhibits MelA galactosidase activity. The polypeptide is Acetyl esterase (Escherichia coli O81 (strain ED1a)).